The primary structure comprises 293 residues: Bifunctional protein FolD (293 aa).

NADP(+) contacts are provided by residues 164-166 (GRS), serine 193, and threonine 234.

This sequence belongs to the tetrahydrofolate dehydrogenase/cyclohydrolase family. As to quaternary structure, homodimer.

The enzyme catalyses (6R)-5,10-methylene-5,6,7,8-tetrahydrofolate + NADP(+) = (6R)-5,10-methenyltetrahydrofolate + NADPH. It carries out the reaction (6R)-5,10-methenyltetrahydrofolate + H2O = (6R)-10-formyltetrahydrofolate + H(+). The protein operates within one-carbon metabolism; tetrahydrofolate interconversion. Its function is as follows. Catalyzes the oxidation of 5,10-methylenetetrahydrofolate to 5,10-methenyltetrahydrofolate and then the hydrolysis of 5,10-methenyltetrahydrofolate to 10-formyltetrahydrofolate. The chain is Bifunctional protein FolD from Phocaeicola vulgatus (strain ATCC 8482 / DSM 1447 / JCM 5826 / CCUG 4940 / NBRC 14291 / NCTC 11154) (Bacteroides vulgatus).